Consider the following 475-residue polypeptide: Threonine synthase (475 aa).

Residue Lys120 is modified to N6-(pyridoxal phosphate)lysine.

It belongs to the threonine synthase family. Requires pyridoxal 5'-phosphate as cofactor.

It catalyses the reaction O-phospho-L-homoserine + H2O = L-threonine + phosphate. It participates in amino-acid biosynthesis; L-threonine biosynthesis; L-threonine from L-aspartate: step 5/5. Functionally, catalyzes the gamma-elimination of phosphate from L-phosphohomoserine and the beta-addition of water to produce L-threonine. This is Threonine synthase (thrC) from Methylobacillus glycogenes.